Here is a 382-residue protein sequence, read N- to C-terminus: MGIHGLAKLIADVAPAAIKEHDIKSYFGRKVAVDASMCIYQFLIAVRQDGNTLQNEEGETTSHLMGMFYRTIRMVEHGIKPVYVFDGKPPQMKSGELAKRSERRAEAEKLLEAAEEAGEVENIEKFTKRLVKVTKQHNEECKKLLTLMGIPYVDAPCEAEATCAALVKAGKVYAAATEDMDALTFGTPVLLRHLTASEAKKLPIQEFHLNRVIQDIGITHEQFVDLCILLGSDYCETIRGIGPKRAIDLIRQHKTIDEIIDNIDLKKYPVPENWLHKEAKHLFLEPEVVDTDITELKWIEPDEEGLVAFMCGEKQFSEDRIRNGAKKLAKNRQGSTQGRLDDFFKVTGSVSSTKRKEAESKGSAKKKAKTGGTPAGKFKRGK.

The segment at 1-104 (MGIHGLAKLI…GELAKRSERR (104 aa)) is N-domain. Position 34 (Asp34) interacts with Mg(2+). 2 residues coordinate DNA: Arg47 and Arg70. Mg(2+) is bound by residues Asp86, Glu158, Glu160, Asp179, and Asp181. The interval 122-253 (NIEKFTKRLV…KRAIDLIRQH (132 aa)) is I-domain. Glu158 contributes to the DNA binding site. Residues Gly231 and Asp233 each coordinate DNA. Mg(2+) is bound at residue Asp233. Positions 336–344 (TQGRLDDFF) are interaction with PCNA. Positions 350-382 (VSSTKRKEAESKGSAKKKAKTGGTPAGKFKRGK) are disordered.

It belongs to the XPG/RAD2 endonuclease family. FEN1 subfamily. As to quaternary structure, interacts with PCNA. Three molecules of fen1 bind to one PCNA trimer with each molecule binding to one PCNA monomer. PCNA stimulates the nuclease activity without altering cleavage specificity. The cofactor is Mg(2+). Phosphorylated. Phosphorylation upon DNA damage induces relocalization to the nuclear plasma.

Its subcellular location is the nucleus. It is found in the nucleolus. It localises to the nucleoplasm. The protein resides in the mitochondrion. In terms of biological role, structure-specific nuclease with 5'-flap endonuclease and 5'-3' exonuclease activities involved in DNA replication and repair. During DNA replication, cleaves the 5'-overhanging flap structure that is generated by displacement synthesis when DNA polymerase encounters the 5'-end of a downstream Okazaki fragment. It enters the flap from the 5'-end and then tracks to cleave the flap base, leaving a nick for ligation. Also involved in the long patch base excision repair (LP-BER) pathway, by cleaving within the apurinic/apyrimidinic (AP) site-terminated flap. Acts as a genome stabilization factor that prevents flaps from equilibrating into structures that lead to duplications and deletions. Also possesses 5'-3' exonuclease activity on nicked or gapped double-stranded DNA, and exhibits RNase H activity. Also involved in replication and repair of rDNA and in repairing mitochondrial DNA. The sequence is that of Flap endonuclease 1-A (fen1-a) from Xenopus laevis (African clawed frog).